Reading from the N-terminus, the 275-residue chain is Large ribosomal subunit protein uL2 (275 aa).

A compositionally biased stretch (polar residues) spans threonine 36–isoleucine 49. 2 disordered regions span residues threonine 36–lysine 59 and alanine 224–arginine 275. Positions threonine 50–lysine 59 are enriched in basic residues.

It belongs to the universal ribosomal protein uL2 family. In terms of assembly, part of the 50S ribosomal subunit. Forms a bridge to the 30S subunit in the 70S ribosome.

Its function is as follows. One of the primary rRNA binding proteins. Required for association of the 30S and 50S subunits to form the 70S ribosome, for tRNA binding and peptide bond formation. It has been suggested to have peptidyltransferase activity; this is somewhat controversial. Makes several contacts with the 16S rRNA in the 70S ribosome. In Burkholderia vietnamiensis (strain G4 / LMG 22486) (Burkholderia cepacia (strain R1808)), this protein is Large ribosomal subunit protein uL2.